Here is a 490-residue protein sequence, read N- to C-terminus: Cytochrome P450 2C55 (490 aa).

Position 435 (Cys-435) interacts with heme.

This sequence belongs to the cytochrome P450 family. Heme is required as a cofactor. As to expression, highest level in colon. Low levels in liver and small intestine.

The protein localises to the endoplasmic reticulum membrane. Its subcellular location is the microsome membrane. The enzyme catalyses an organic molecule + reduced [NADPH--hemoprotein reductase] + O2 = an alcohol + oxidized [NADPH--hemoprotein reductase] + H2O + H(+). Functionally, metabolizes arachidonic acid mainly to 19-hydroxyeicosatetraenoic acid (HETE). This chain is Cytochrome P450 2C55, found in Mus musculus (Mouse).